The sequence spans 173 residues: Small ribosomal subunit protein uS5 (173 aa).

Residues 17 to 80 (WQERVIQIRR…SDAKKHVVDV (64 aa)) enclose the S5 DRBM domain.

It belongs to the universal ribosomal protein uS5 family. As to quaternary structure, part of the 30S ribosomal subunit. Contacts proteins S4 and S8.

Its function is as follows. With S4 and S12 plays an important role in translational accuracy. Functionally, located at the back of the 30S subunit body where it stabilizes the conformation of the head with respect to the body. This chain is Small ribosomal subunit protein uS5, found in Picosynechococcus sp. (strain ATCC 27264 / PCC 7002 / PR-6) (Agmenellum quadruplicatum).